Reading from the N-terminus, the 328-residue chain is Sialic acid-binding Ig-like lectin 15 (328 aa).

The first 19 residues, 1 to 19 (MEKSIWLLACLAWVLPTGS), serve as a signal peptide directing secretion. The Extracellular portion of the chain corresponds to 20–263 (FVRTKIDTTE…RFHGASGAST (244 aa)). In terms of domain architecture, Ig-like V-type spans 40–158 (PAQRWSMQVP…DVHDRYESRH (119 aa)). 2 disulfide bridges follow: Cys64–Cys142 and Cys95–Cys104. Arg143 lines the N-acetylneuraminate pocket. In terms of domain architecture, Ig-like C2-type spans 168 to 251 (PRIVNISVLP…SLGRSEASVY (84 aa)). Asn172 carries an N-linked (GlcNAc...) asparagine glycan. An intrachain disulfide couples Cys187 to Cys237. A helical transmembrane segment spans residues 264 to 284 (VALLLGALGFKALLLLGVLAA). Topologically, residues 285–328 (RAARRRPEHLDTPDTPPRSQAQESNYENLSQMNPRSPPATMCSP) are cytoplasmic. The segment at 289 to 328 (RRPEHLDTPDTPPRSQAQESNYENLSQMNPRSPPATMCSP) is disordered. The segment covering 301-318 (PRSQAQESNYENLSQMNP) has biased composition (polar residues).

It belongs to the immunoglobulin superfamily. SIGLEC (sialic acid binding Ig-like lectin) family. Interacts with TYROBP and HCST. In terms of tissue distribution, expressed in macrophage and/or dendritic cells of spleen and lymph nodes.

It is found in the membrane. Binds sialylated glycoproteins. The polypeptide is Sialic acid-binding Ig-like lectin 15 (SIGLEC15) (Homo sapiens (Human)).